Consider the following 195-residue polypeptide: Protein GrpE (195 aa).

A disordered region spans residues 1–60; it reads MAKDEEKNSQASAAPNEGEVKAKQEQTSAKEPAAKAGETEKVADLQKQVEELTKQLDDQK. The span at 37–60 shows a compositional bias: basic and acidic residues; the sequence is GETEKVADLQKQVEELTKQLDDQK.

It belongs to the GrpE family. Homodimer.

It is found in the cytoplasm. Participates actively in the response to hyperosmotic and heat shock by preventing the aggregation of stress-denatured proteins, in association with DnaK and GrpE. It is the nucleotide exchange factor for DnaK and may function as a thermosensor. Unfolded proteins bind initially to DnaJ; upon interaction with the DnaJ-bound protein, DnaK hydrolyzes its bound ATP, resulting in the formation of a stable complex. GrpE releases ADP from DnaK; ATP binding to DnaK triggers the release of the substrate protein, thus completing the reaction cycle. Several rounds of ATP-dependent interactions between DnaJ, DnaK and GrpE are required for fully efficient folding. The sequence is that of Protein GrpE from Limosilactobacillus fermentum (strain NBRC 3956 / LMG 18251) (Lactobacillus fermentum).